Here is a 213-residue protein sequence, read N- to C-terminus: mRNA-decapping protein D9 (213 aa).

Residues 30 to 209 enclose the Nudix hydrolase domain; it reads KDTHVFAACI…EYLSYIYNML (180 aa). The Nudix box motif lies at 111–132; sequence GKLDKKESIKDCLRRELKEESD. E117 lines the Mg(2+) pocket. Catalysis depends on E126, which acts as the Nucleophile. Positions 130 and 151 each coordinate Mg(2+).

Belongs to the Nudix hydrolase family. It depends on Mg(2+) as a cofactor. The cofactor is Mn(2+).

Decapping enzyme required for the removal of the 5'-end m7GpppN cap tethered to viral and host mRNAs to allow their decay in cells. May therefore accelerate viral and cellular mRNA turnover to eliminate competing host mRNAs and allow stage-specific synthesis of viral proteins. Acceleration of the turnover of cellular transcripts may even promote the shutoff of host protein synthesis. Does not cleave unmethylated RNAs or RNAs shorter than 24 nucleotides. The polypeptide is mRNA-decapping protein D9 (Homo sapiens (Human)).